Reading from the N-terminus, the 889-residue chain is Coatomer subunit beta' (889 aa).

6 WD repeats span residues 11–41, 53–83, 95–125, 138–169, 182–214, and 226–256; these read NRSDRVKGIDFHPTEPWVLTTLYSGRVELWN, VTETPVRAGKFIARKNWIIVGSDDFRIRVFN, AHPDYIRSIAVHPTKPYVLSGSDDLTVKLWN, GHEHFVMCVAFNPKDPSTFASGCLDRTVKVWS, GQERGVNYVDYYPLPDKPYMITASDDLTIKIWD, and GHMSNVSFAVFHPTLPIIISGSEDGTLKIWN. Phosphoserine is present on Ser-326. The interval 806–889 is disordered; sequence CGAEGLPGSS…AVPEPVEEES (84 aa). Residues 836–864 are compositionally biased toward basic and acidic residues; the sequence is DENKEAEVEDSEFKESNSEAVEAEKKEEE. Over residues 866–879 the composition is skewed to low complexity; sequence PQQQQSEQQPEQGE.

It belongs to the WD repeat COPB2 family. In terms of assembly, oligomeric complex that consists of at least the alpha, beta, beta', gamma, delta, epsilon and zeta subunits. Interacts with the ESCRT-0 subunit VPS27.

It localises to the cytoplasm. The protein localises to the golgi apparatus membrane. Its subcellular location is the cytoplasmic vesicle. The protein resides in the COPI-coated vesicle membrane. Functionally, the coatomer is a cytosolic protein complex that binds to dilysine motifs and reversibly associates with Golgi non-clathrin-coated vesicles, which further mediate biosynthetic protein transport from the ER, via the Golgi up to the trans Golgi network. Coatomer complex is required for budding from Golgi membranes, and is essential for the retrograde Golgi-to-ER transport of dilysine-tagged proteins. The polypeptide is Coatomer subunit beta' (SEC27) (Saccharomyces cerevisiae (strain ATCC 204508 / S288c) (Baker's yeast)).